Consider the following 22-residue polypeptide: Defensin D1 (22 aa).

Belongs to the DEFL family. Group II subfamily.

Functionally, antimicrobial peptide. Active against Gram-positive and Gram-negative bacterial pathogens. The polypeptide is Defensin D1 (Spinacia oleracea (Spinach)).